The following is a 266-amino-acid chain: F-box/kelch-repeat protein At4g39560 (266 aa).

The F-box domain occupies 24 to 70 (STQILSLPVDLLISILARVSRLDYPILSLVSKSFRSLIASPELYETR). Kelch repeat units follow at residues 130 to 176 (DIYN…VIDG), 178 to 223 (IYVA…KSAV), and 226 to 266 (EAIC…LLVA).

The protein is F-box/kelch-repeat protein At4g39560 of Arabidopsis thaliana (Mouse-ear cress).